The primary structure comprises 301 residues: Diaminopimelate epimerase (301 aa).

Asn15, Gln47, and Asn67 together coordinate substrate. Cys76 functions as the Proton donor in the catalytic mechanism. Residues 77 to 78 (GN), Asn163, Asn197, and 215 to 216 (ER) contribute to the substrate site. Cys224 serves as the catalytic Proton acceptor. 225-226 (GS) is a binding site for substrate. Positions 280–301 (SGSLDPSTGLWSRDGTQEAGAR) are disordered.

This sequence belongs to the diaminopimelate epimerase family. Homodimer.

The protein localises to the cytoplasm. The enzyme catalyses (2S,6S)-2,6-diaminopimelate = meso-2,6-diaminopimelate. The protein operates within amino-acid biosynthesis; L-lysine biosynthesis via DAP pathway; DL-2,6-diaminopimelate from LL-2,6-diaminopimelate: step 1/1. Catalyzes the stereoinversion of LL-2,6-diaminopimelate (L,L-DAP) to meso-diaminopimelate (meso-DAP), a precursor of L-lysine and an essential component of the bacterial peptidoglycan. This Rhizobium leguminosarum bv. trifolii (strain WSM2304) protein is Diaminopimelate epimerase.